Reading from the N-terminus, the 710-residue chain is Polyribonucleotide nucleotidyltransferase (710 aa).

The Mg(2+) site is built by Asp488 and Asp494. A KH domain is found at Pro555 to Ile615. One can recognise an S1 motif domain in the interval Gly625–Phe688. The interval Phe688–Asn710 is disordered. Positions Ser691 to Arg700 are enriched in basic and acidic residues. Basic residues predominate over residues Ser701 to Asn710.

The protein belongs to the polyribonucleotide nucleotidyltransferase family. Mg(2+) is required as a cofactor.

The protein localises to the cytoplasm. The catalysed reaction is RNA(n+1) + phosphate = RNA(n) + a ribonucleoside 5'-diphosphate. In terms of biological role, involved in mRNA degradation. Catalyzes the phosphorolysis of single-stranded polyribonucleotides processively in the 3'- to 5'-direction. In Pseudothermotoga lettingae (strain ATCC BAA-301 / DSM 14385 / NBRC 107922 / TMO) (Thermotoga lettingae), this protein is Polyribonucleotide nucleotidyltransferase.